Reading from the N-terminus, the 510-residue chain is MISKLLKIVLLTAGVIGNTLADSRIHEQYLVKAFPNEPVDYEGRMHAGHLNQTDQLDGDLFFWMFESVKPEYEHRSILWLNGGPGCSSEDGSLMEVGPFRLDDNNTFQLNPGRWDELGNLLFVDQPLGTGYSYSLAKDFQSNNEKMANDFSIFFEKFLEEFPERANDEWFIAGESFAGQYIPHIAAKLKEKNLVNLGGLAIGNGWINPLSHYETYLNYLVEKGMVDFESELGQYLHHSWAECLLAFDKIGSGSGDLSKCESFLGDILYMVSKEPGKACMNMYDISLESTYPTCGMDWPYDLSYLTEFLSTREAMTSLNVNLEKVHDWEECNDDVALQYAREGIESSSKLIQDLVSTVPILLFYGENDFLCNYLSGEKLTRSLEWNGAVGFQNQSAQPFYLPGYSDQPSGSYVSSRNLTFARIVEASHMVPYDHPNEMKTLITAFFNNDFASLPSVPKPSPDLGNGNYKWLYLGLIPVALTIIILFSIYLCRRFGLFGLSKQRYQPISPTP.

The first 21 residues, 1 to 21 (MISKLLKIVLLTAGVIGNTLA), serve as a signal peptide directing secretion. Residues 22 to 468 (DSRIHEQYLV…SPDLGNGNYK (447 aa)) lie on the Lumenal side of the membrane. 2 N-linked (GlcNAc...) asparagine glycosylation sites follow: Asn51 and Asn104. Catalysis depends on residues Ser175 and Asp367. N-linked (GlcNAc...) asparagine glycans are attached at residues Asn392 and Asn416. Residue His427 is part of the active site. A helical transmembrane segment spans residues 469–489 (WLYLGLIPVALTIIILFSIYL). At 490-510 (CRRFGLFGLSKQRYQPISPTP) the chain is on the cytoplasmic side.

The protein belongs to the peptidase S10 family.

The protein localises to the golgi apparatus. It is found in the trans-Golgi network membrane. It localises to the vacuole membrane. It carries out the reaction Preferential release of a C-terminal arginine or lysine residue.. Functionally, protease with a carboxypeptidase B-like function involved in the C-terminal processing of the lysine and arginine residues from protein precursors. Promotes cell fusion and is involved in the programmed cell death. The protein is Pheromone-processing carboxypeptidase kex1 (kex1) of Schizosaccharomyces pombe (strain 972 / ATCC 24843) (Fission yeast).